The primary structure comprises 204 residues: Venom allergen 5 (204 aa).

Cystine bridges form between Cys4-Cys17, Cys8-Cys101, Cys26-Cys94, and Cys170-Cys187. The 145-residue stretch at 45 to 189 folds into the SCP domain; it reads LKEHNDFRQK…WHKHYLVCNY (145 aa).

The protein belongs to the CRISP family. Venom allergen 5-like subfamily. As to expression, expressed by the venom gland.

The protein localises to the secreted. In Vespula maculifrons (Eastern yellow jacket), this protein is Venom allergen 5.